The following is a 421-amino-acid chain: Medium-chain specific acyl-CoA dehydrogenase, mitochondrial (421 aa).

Residues 1–25 (MAAGFGRCCRVLRSISRFQWRSQHT) constitute a mitochondrion transit peptide. The residue at position 69 (Lys-69) is an N6-acetyllysine; alternate. Lys-69 carries the N6-succinyllysine; alternate modification. Residue 158–167 (YCVTEPGAGS) coordinates FAD. An octanoyl-CoA-binding site is contributed by Ser-167. Lys-179 is modified (N6-succinyllysine). 191 to 193 (WIT) contributes to the FAD binding site. N6-acetyllysine; alternate is present on residues Lys-212, Lys-217, and Lys-271. 3 positions are modified to N6-succinyllysine; alternate: Lys-212, Lys-217, and Lys-271. Asp-278 serves as a coordination point for octanoyl-CoA. Residue Lys-279 is modified to N6-acetyllysine. Arg-281 is an octanoyl-CoA binding site. At Lys-301 the chain carries N6-acetyllysine. FAD is bound by residues 306–308 (RKT) and 316–317 (HQ). Residues Arg-349 and Thr-351 each coordinate octanoyl-CoA. The residue at position 351 (Thr-351) is a Phosphothreonine. FAD is bound at residue 374–378 (QILGG). Octanoyl-CoA is bound at residue Glu-401. Glu-401 serves as the catalytic Proton acceptor. 402–405 (GTSQ) provides a ligand contact to FAD.

This sequence belongs to the acyl-CoA dehydrogenase family. As to quaternary structure, homotetramer. Interacts with the heterodimeric electron transfer flavoprotein ETF. Requires FAD as cofactor. Post-translationally, acetylated. Could occur at proximity of the cofactor-binding sites and reduce the catalytic activity. Could be deacetylated by SIRT3.

The protein resides in the mitochondrion matrix. The enzyme catalyses a medium-chain 2,3-saturated fatty acyl-CoA + oxidized [electron-transfer flavoprotein] + H(+) = a medium-chain (2E)-enoyl-CoA + reduced [electron-transfer flavoprotein]. The catalysed reaction is pentanoyl-CoA + oxidized [electron-transfer flavoprotein] + H(+) = (2E)-pentenoyl-CoA + reduced [electron-transfer flavoprotein]. It catalyses the reaction hexanoyl-CoA + oxidized [electron-transfer flavoprotein] + H(+) = (2E)-hexenoyl-CoA + reduced [electron-transfer flavoprotein]. It carries out the reaction octanoyl-CoA + oxidized [electron-transfer flavoprotein] + H(+) = (2E)-octenoyl-CoA + reduced [electron-transfer flavoprotein]. The enzyme catalyses decanoyl-CoA + oxidized [electron-transfer flavoprotein] + H(+) = (2E)-decenoyl-CoA + reduced [electron-transfer flavoprotein]. The catalysed reaction is dodecanoyl-CoA + oxidized [electron-transfer flavoprotein] + H(+) = (2E)-dodecenoyl-CoA + reduced [electron-transfer flavoprotein]. It catalyses the reaction tetradecanoyl-CoA + oxidized [electron-transfer flavoprotein] + H(+) = (2E)-tetradecenoyl-CoA + reduced [electron-transfer flavoprotein]. It carries out the reaction oxidized [electron-transfer flavoprotein] + hexadecanoyl-CoA + H(+) = (2E)-hexadecenoyl-CoA + reduced [electron-transfer flavoprotein]. The protein operates within lipid metabolism; mitochondrial fatty acid beta-oxidation. Functionally, medium-chain specific acyl-CoA dehydrogenase is one of the acyl-CoA dehydrogenases that catalyze the first step of mitochondrial fatty acid beta-oxidation, an aerobic process breaking down fatty acids into acetyl-CoA and allowing the production of energy from fats. The first step of fatty acid beta-oxidation consists in the removal of one hydrogen from C-2 and C-3 of the straight-chain fatty acyl-CoA thioester, resulting in the formation of trans-2-enoyl-CoA. Electron transfer flavoprotein (ETF) is the electron acceptor that transfers electrons to the main mitochondrial respiratory chain via ETF-ubiquinone oxidoreductase (ETF dehydrogenase). Among the different mitochondrial acyl-CoA dehydrogenases, medium-chain specific acyl-CoA dehydrogenase acts specifically on acyl-CoAs with saturated 6 to 12 carbons long primary chains. The protein is Medium-chain specific acyl-CoA dehydrogenase, mitochondrial of Pan troglodytes (Chimpanzee).